Here is a 600-residue protein sequence, read N- to C-terminus: NADH-quinone oxidoreductase subunit C/D (600 aa).

The segment at 1–190 (MVNNMTDLTA…DPFELTKAKQ (190 aa)) is NADH dehydrogenase I subunit C. The tract at residues 214–600 (DFMFLNLGPN…IDFVMSDVDR (387 aa)) is NADH dehydrogenase I subunit D.

It in the N-terminal section; belongs to the complex I 30 kDa subunit family. This sequence in the C-terminal section; belongs to the complex I 49 kDa subunit family. NDH-1 is composed of 13 different subunits. Subunits NuoB, CD, E, F, and G constitute the peripheral sector of the complex.

It localises to the cell inner membrane. It carries out the reaction a quinone + NADH + 5 H(+)(in) = a quinol + NAD(+) + 4 H(+)(out). In terms of biological role, NDH-1 shuttles electrons from NADH, via FMN and iron-sulfur (Fe-S) centers, to quinones in the respiratory chain. The immediate electron acceptor for the enzyme in this species is believed to be ubiquinone. Couples the redox reaction to proton translocation (for every two electrons transferred, four hydrogen ions are translocated across the cytoplasmic membrane), and thus conserves the redox energy in a proton gradient. This Salmonella paratyphi C (strain RKS4594) protein is NADH-quinone oxidoreductase subunit C/D.